The chain runs to 229 residues: Ion-translocating oxidoreductase complex subunit E (229 aa).

5 helical membrane-spanning segments follow: residues 58-78 (LGLGLATLLVLTITNTIISLF), 82-102 (IPHDIRIPIYVMIIATAVTTI), 105-125 (LMNAFAFPVYQSLGIFVPLIV), 147-167 (AFDGFAMGLGMTLSLVVLGAI), and 201-221 (GLLLAILPPGAFIGLGLILAV).

This sequence belongs to the NqrDE/RnfAE family. The complex is composed of six subunits: RnfA, RnfB, RnfC, RnfD, RnfE and RnfG.

Its subcellular location is the cell inner membrane. In terms of biological role, part of a membrane-bound complex that couples electron transfer with translocation of ions across the membrane. This is Ion-translocating oxidoreductase complex subunit E from Glaesserella parasuis serovar 5 (strain SH0165) (Haemophilus parasuis).